Reading from the N-terminus, the 603-residue chain is Polypeptide N-acetylgalactosaminyltransferase 10 (603 aa).

The Cytoplasmic segment spans residues 1–11; that stretch reads MRRKEKRLLQA. The helical; Signal-anchor for type II membrane protein transmembrane segment at 12-31 threads the bilayer; that stretch reads VALALAALVLLPNVGLWALY. At 32 to 603 the chain is on the lumenal side; that stretch reads RERQPDGSPG…STVLENFNRN (572 aa). 2 N-linked (GlcNAc...) asparagine glycosylation sites follow: Asn-124 and Asn-146. 5 disulfides stabilise this stretch: Cys-135-Cys-365, Cys-356-Cys-432, Cys-471-Cys-488, Cys-523-Cys-538, and Cys-563-Cys-578. Residues 144–253 form a catalytic subdomain A region; it reads LPNTSIIIPF…VNWLPPLLDR (110 aa). Residues Asp-185 and Arg-214 each coordinate substrate. Asp-237 provides a ligand contact to Mn(2+). Position 238 (Ser-238) interacts with substrate. Residue His-239 coordinates Mn(2+). The catalytic subdomain B stretch occupies residues 311 to 373; that stretch reads PFESPVMAGG…PCSRVGHIYR (63 aa). Trp-342 serves as a coordination point for substrate. His-370 contacts Mn(2+). Positions 373 and 378 each coordinate substrate. The interval 373 to 384 is flexible loop; the sequence is RKYVPYKVPAGV. Positions 458–590 constitute a Ricin B-type lectin domain; it reads AAWGEIRNVG…SSLTQQWLFE (133 aa). A glycan (N-linked (GlcNAc...) asparagine) is linked at Asn-593.

This sequence belongs to the glycosyltransferase 2 family. GalNAc-T subfamily. Mn(2+) is required as a cofactor. In terms of tissue distribution, highly expressed in the sublingual gland, testis, small intestine, colon and ovary. Expressed at intermediate level in heart, brain, spleen, lung, stomach, cervix and uterus.

Its subcellular location is the golgi apparatus membrane. The enzyme catalyses L-seryl-[protein] + UDP-N-acetyl-alpha-D-galactosamine = a 3-O-[N-acetyl-alpha-D-galactosaminyl]-L-seryl-[protein] + UDP + H(+). It carries out the reaction L-threonyl-[protein] + UDP-N-acetyl-alpha-D-galactosamine = a 3-O-[N-acetyl-alpha-D-galactosaminyl]-L-threonyl-[protein] + UDP + H(+). It functions in the pathway protein modification; protein glycosylation. Functionally, catalyzes the initial reaction in O-linked oligosaccharide biosynthesis, the transfer of an N-acetyl-D-galactosamine residue to a serine or threonine residue on the protein receptor. Has activity toward Muc5Ac and EA2 peptide substrates. In Rattus norvegicus (Rat), this protein is Polypeptide N-acetylgalactosaminyltransferase 10 (Galnt10).